Consider the following 73-residue polypeptide: Large ribosomal subunit protein bL31 (73 aa).

It belongs to the bacterial ribosomal protein bL31 family. Type A subfamily. Part of the 50S ribosomal subunit.

Binds the 23S rRNA. The polypeptide is Large ribosomal subunit protein bL31 (Allorhizobium ampelinum (strain ATCC BAA-846 / DSM 112012 / S4) (Agrobacterium vitis (strain S4))).